We begin with the raw amino-acid sequence, 116 residues long: ATP-dependent Clp protease adapter protein ClpS (116 aa).

Residues M1–K11 are compositionally biased toward polar residues. Positions M1–V23 are disordered.

It belongs to the ClpS family. Binds to the N-terminal domain of the chaperone ClpA.

Functionally, involved in the modulation of the specificity of the ClpAP-mediated ATP-dependent protein degradation. The polypeptide is ATP-dependent Clp protease adapter protein ClpS (Brucella abortus (strain S19)).